The primary structure comprises 823 residues: Protein Shroom1 (823 aa).

Met1 bears the N-acetylmethionine mark. 3 disordered regions span residues 1-55, 72-110, and 124-159; these read MEAL…TERL, PTSKDAVLSTTQRPVQAVAGHSDPRSPEVQGSPGPLNRQ, and ATAHTAEPPSPPASRDAYRQRLQGAQRRVLRETSFQ. 2 stretches are compositionally biased toward polar residues: residues 28–50 and 72–85; these read RADSAYSSFSTASGDPETRTPSP and PTSKDAVLSTTQRP. Ser103, Ser133, Ser137, Ser166, Ser190, and Ser224 each carry phosphoserine. The ASD1 domain maps to 145-233; it reads LQGAQRRVLR…SEPGKLHRVG (89 aa). Positions 181-200 are disordered; it reads TAHVRSASSSQELGEEEPAR. 2 disordered regions span residues 270-303 and 349-375; these read SSTELNSGPADLGNAHRPAGRSQSVSGEVMGPCK and QTKPAGCGRRISETSVSTPGPSLPEDD. Residue Thr383 is modified to Phosphothreonine. Ser385 bears the Phosphoserine mark. Disordered stretches follow at residues 420–503 and 566–620; these read LHET…LTWG and EMGE…STQA. Polar residues-rich tracts occupy residues 444–468, 489–503, and 586–620; these read RPTSIPETTNDDIPTFDTNGTTDPS, SETPGSPHHTSLTWG, and QDLQTSQEASRSENSTPDPDQSSGQEFPEGNSTQA. Residues 517-796 form the ASD2 domain; that stretch reads EALVQELARL…QLDTIWSDLS (280 aa).

This sequence belongs to the shroom family. In terms of assembly, interacts with F-actin.

Its subcellular location is the cytoplasm. It localises to the cytoskeleton. Functionally, may be involved in the assembly of microtubule arrays during cell elongation. This is Protein Shroom1 (Shroom1) from Mus musculus (Mouse).